The following is a 142-amino-acid chain: Interleukin-3 (142 aa).

A signal peptide spans 1–18; it reads MSHLPILLLLLLVSPGLQ. Residue Asn-33 is glycosylated (N-linked (GlcNAc...) asparagine). Cys-34 and Cys-102 are oxidised to a cystine.

This sequence belongs to the IL-3 family. Monomer. In terms of tissue distribution, activated T-cells, mast cells, natural killer cells.

It localises to the secreted. Its function is as follows. Granulocyte/macrophage colony-stimulating factors are cytokines that act in hematopoiesis by controlling the production, differentiation, and function of 2 related white cell populations of the blood, the granulocytes and the monocytes-macrophages. Functionally, this CSF induces granulocytes, macrophages, mast cells, stem cells, erythroid cells, eosinophils and megakaryocytes. This chain is Interleukin-3 (IL3), found in Callithrix jacchus (White-tufted-ear marmoset).